The chain runs to 521 residues: Cyclic AMP-responsive element-binding protein 3-like protein 2 (521 aa).

Residues 1–378 lie on the Cytoplasmic side of the membrane; that stretch reads MEVLESGEQS…CKLAGTQTGT (378 aa). At S93 the chain carries Phosphoserine. Residue K178 forms a Glycyl lysine isopeptide (Lys-Gly) (interchain with G-Cter in SUMO2) linkage. At S191 the chain carries Phosphoserine. A disordered region spans residues 196–264; the sequence is SVDQLHLPPT…PHKLQGSGPL (69 aa). Positions 208–220 are enriched in low complexity; the sequence is SSHSSDSEGSLSP. A bZIP domain is found at 294–357; it reads ALKKIRRKIK…RTLLQQLQKL (64 aa). The interval 296–325 is basic motif; sequence KKIRRKIKNKISAQESRRKKKEYMDSLEKK. A leucine-zipper region spans residues 336–357; sequence LRKKVEVLENTNRTLLQQLQKL. A helical; Signal-anchor for type II membrane protein membrane pass occupies residues 379–399; that stretch reads CLMVVVLCFAVAFGSLFQGYG. Residues 400-521 are Lumenal-facing; that stretch reads LYPSATKMAL…ELERRVNATF (122 aa). Positions 427–430 match the S1P recognition motif; that stretch reads RNLL. N-linked (GlcNAc...) asparagine glycosylation is found at N505 and N518.

Belongs to the bZIP family. ATF subfamily. As to quaternary structure, binds DNA as a dimer. Post-translationally, upon ER stress, translocated to the Golgi apparatus, where it is processed by regulated intramembrane proteolysis (RIP) to release the cytosol-facing N-terminal transcription factor domain. The cleavage is performed sequentially by site-1 and site-2 proteases (S1P/MBTPS1 and S2P/MBTPS2). In terms of processing, N-glycosylated. Ubiquitinated by HRD1/SYVN1; undergoes 'Lys-48'-linked ubiquitination, followed by rapid proteasomal degradation under normal conditions. Upon ER stress, SYVN1 E3 ubiquitin-protein ligase dissociates from its substrate, ubiquitination does not occur and CREB3L2 is stabilized.

The protein resides in the endoplasmic reticulum membrane. It is found in the nucleus. In terms of biological role, transcription factor involved in unfolded protein response (UPR). In the absence of endoplasmic reticulum (ER) stress, inserted into ER membranes, with N-terminal DNA-binding and transcription activation domains oriented toward the cytosolic face of the membrane. In response to ER stress, transported to the Golgi, where it is cleaved in a site-specific manner by resident proteases S1P/MBTPS1 and S2P/MBTPS2. The released N-terminal cytosolic domain is translocated to the nucleus to effect transcription of specific target genes. Plays a critical role in chondrogenesis by activating the transcription of SEC23A, which promotes the transport and secretion of cartilage matrix proteins, and possibly that of ER biogenesis-related genes. In a neuroblastoma cell line, protects cells from ER stress-induced death. In vitro activates transcription of target genes via direct binding to the CRE site. The polypeptide is Cyclic AMP-responsive element-binding protein 3-like protein 2 (Creb3l2) (Rattus norvegicus (Rat)).